The chain runs to 816 residues: Metabotropic glutamate receptor-like protein E (816 aa).

An N-terminal signal peptide occupies residues 1 to 27 (MKIKIGNILKNVVILVIFSLFISKINS). Over 28-436 (EVVKPNPAKP…QVVVFDRTLN (409 aa)) the chain is Extracellular. N-linked (GlcNAc...) asparagine glycans are attached at residues asparagine 68, asparagine 311, and asparagine 388. A helical transmembrane segment spans residues 437-457 (IVLGVITGVCVLIVIGIGSVI). Residues 458–469 (ALQWRKFRYSSP) are Cytoplasmic-facing. The chain crosses the membrane as a helical span at residues 470-490 (LFCMFIIIGALMGLASVFTLL). Residues 491-496 (PTPTTP) lie on the Extracellular side of the membrane. The chain crosses the membrane as a helical span at residues 497 to 517 (LCSGFPWLLGLGYVIVFGTLF). The Cytoplasmic portion of the chain corresponds to 518 to 541 (TKTWRTWRLFSNARKFKIIRITNK). A helical transmembrane segment spans residues 542-562 (FIITLVGGFVLLESIFMIIWT). The Extracellular portion of the chain corresponds to 563–590 (AVDRPIPLAEPIFKAGEAQLQCTSDSEA). The helical transmembrane segment at 591-611 (WWYVFVFYKVFYILFGVFLAF) threads the bilayer. The Cytoplasmic portion of the chain corresponds to 612 to 625 (KTRNVVDSLNESKP). The chain crosses the membrane as a helical span at residues 626 to 646 (ITLALYNLTFVMVVAIALGFI). Residues 647 to 653 (LRDNPIA) are Extracellular-facing. Residues 654 to 674 (IIVIQTIAILLGFTVTVSVLF) traverse the membrane as a helical segment. Over 675-816 (LPKVWMILSG…KKKKKKNNNK (142 aa)) the chain is Cytoplasmic. A disordered region spans residues 697-718 (DSMGRSNGNTTEAESTRGYTNK).

This sequence belongs to the G-protein coupled receptor 3 family.

It is found in the membrane. In terms of biological role, may be involved in early development in cAMP sensing and subsequent chemotactic response. Probable receptor of GABA and glutamate, leading respectively to the induction or inhibition of SDF-2 formation. This Dictyostelium discoideum (Social amoeba) protein is Metabotropic glutamate receptor-like protein E (grlE).